Here is a 477-residue protein sequence, read N- to C-terminus: Pentatricopeptide repeat-containing protein At1g55630 (477 aa).

PPR repeat units lie at residues 151–185, 186–220, 221–255, 256–290, 291–325, 326–360, 361–395, 396–430, and 431–465; these read TANCYHLLMKIFAECGEYKAMCRLIDEMIKDGYPT, TACTFNLLICTCGEAGLARDVVEQFIKSKTFNYRP, YKHSYNAILHSLLGVKQYKLIDWVYEQMLEDGFTP, DVLTYNIVMFANFRLGKTDRLYRLLDEMVKDGFSP, DLYTYNILLHHLATGNKPLAALNLLNHMREVGVEP, GVIHFTTLIDGLSRAGKLEACKYFMDETVKVGCTP, DVVCYTVMITGYISGGELEKAEEMFKEMTEKGQLP, NVFTYNSMIRGFCMAGKFKEACALLKEMESRGCNP, and NFVVYSTLVNNLKNAGKVLEAHEVVKDMVEKGHYV.

This sequence belongs to the PPR family. P subfamily.

The chain is Pentatricopeptide repeat-containing protein At1g55630 from Arabidopsis thaliana (Mouse-ear cress).